Consider the following 149-residue polypeptide: Putative pre-16S rRNA nuclease (149 aa).

The protein belongs to the YqgF nuclease family.

The protein resides in the cytoplasm. Could be a nuclease involved in processing of the 5'-end of pre-16S rRNA. The sequence is that of Putative pre-16S rRNA nuclease from Synechococcus sp. (strain ATCC 27144 / PCC 6301 / SAUG 1402/1) (Anacystis nidulans).